Consider the following 200-residue polypeptide: Phospholipase A2 inhibitor NAI (200 aa).

Positions 1–19 are cleaved as a signal peptide; that stretch reads MKSLLFCCLFGTFLATGMC. Cystine bridges form between Cys22/Cys46, Cys25/Cys32, Cys39/Cys67, Cys73/Cys94, Cys95/Cys100, Cys120/Cys145, Cys138/Cys165, and Cys171/Cys191.

Belongs to the CNF-like-inhibitor family. In terms of assembly, heterotrimer of 2 subunits A and 1 subunit B; non-covalently linked. As to expression, expressed by the liver.

Its subcellular location is the secreted. Functionally, inhibits the enzymatic activity of all phospholipase A2 tested, binding with micromole to nanomole affinity. The protein is Phospholipase A2 inhibitor NAI of Notechis ater (Black tiger snake).